The following is a 173-amino-acid chain: Methylated-DNA--protein-cysteine methyltransferase (173 aa).

The Nucleophile; methyl group acceptor role is filled by Cys143.

Belongs to the MGMT family.

Its subcellular location is the cytoplasm. It catalyses the reaction a 6-O-methyl-2'-deoxyguanosine in DNA + L-cysteinyl-[protein] = S-methyl-L-cysteinyl-[protein] + a 2'-deoxyguanosine in DNA. The catalysed reaction is a 4-O-methyl-thymidine in DNA + L-cysteinyl-[protein] = a thymidine in DNA + S-methyl-L-cysteinyl-[protein]. Its function is as follows. Involved in the cellular defense against the biological effects of O6-methylguanine (O6-MeG) and O4-methylthymine (O4-MeT) in DNA. Repairs the methylated nucleobase in DNA by stoichiometrically transferring the methyl group to a cysteine residue in the enzyme. This is a suicide reaction: the enzyme is irreversibly inactivated. The protein is Methylated-DNA--protein-cysteine methyltransferase of Pyrococcus sp. (strain NA2).